The chain runs to 302 residues: Actin maturation protease (302 aa).

The segment at 1–26 (MPHTNEDPTAQQAGVILDPPPPLPPP) is disordered. The peptidase C39-like stretch occupies residues 85 to 205 (SLIQEGPQCG…WAVISGVLFG (121 aa)). Residue cysteine 93 is part of the active site.

The protein belongs to the ACTMAP family.

The protein localises to the cytoplasm. The enzyme catalyses N-terminal N(alpha)-acetyl-L-methionyl-L-aspartyl-[protein] + H2O = N-terminal L-aspartyl-[protein] + N-acetyl-L-methionine. It catalyses the reaction N-terminal N(alpha)-acetyl-L-methionyl-L-glutamyl-[protein] + H2O = N-terminal L-glutamyl-[protein] + N-acetyl-L-methionine. The catalysed reaction is N-terminal N(alpha)-acetyl-L-cysteinyl-L-aspartyl-[protein] + H2O = N-terminal L-aspartyl-[protein] + N-acetyl-L-cysteine. It carries out the reaction N-terminal N(alpha)-acetyl-L-cysteinyl-L-glutamyl-[protein] + H2O = N-terminal L-glutamyl-[protein] + N-acetyl-L-cysteine. Its function is as follows. Actin maturation protease that specifically mediates the cleavage of immature acetylated N-terminal actin, thereby contributing to actin maturation. Cleaves N-terminal acetylated methionine of immature cytoplasmic beta- and gamma-actin after translation. Cleaves N-terminal acetylated cysteine of muscle alpha-actin after canonical removal of N-terminal methionine. This is Actin maturation protease from Xenopus tropicalis (Western clawed frog).